We begin with the raw amino-acid sequence, 425 residues long: Serine hydroxymethyltransferase 2 (425 aa).

Residues L121 and 125-127 (GHL) contribute to the (6S)-5,6,7,8-tetrahydrofolate site. K230 is subject to N6-(pyridoxal phosphate)lysine.

The protein belongs to the SHMT family. Homodimer. Pyridoxal 5'-phosphate serves as cofactor.

Its subcellular location is the cytoplasm. The catalysed reaction is (6R)-5,10-methylene-5,6,7,8-tetrahydrofolate + glycine + H2O = (6S)-5,6,7,8-tetrahydrofolate + L-serine. The protein operates within one-carbon metabolism; tetrahydrofolate interconversion. It functions in the pathway amino-acid biosynthesis; glycine biosynthesis; glycine from L-serine: step 1/1. Catalyzes the reversible interconversion of serine and glycine with tetrahydrofolate (THF) serving as the one-carbon carrier. This reaction serves as the major source of one-carbon groups required for the biosynthesis of purines, thymidylate, methionine, and other important biomolecules. Also exhibits THF-independent aldolase activity toward beta-hydroxyamino acids, producing glycine and aldehydes, via a retro-aldol mechanism. The protein is Serine hydroxymethyltransferase 2 of Mycobacterium bovis (strain ATCC BAA-935 / AF2122/97).